A 1218-amino-acid polypeptide reads, in one-letter code: MIDVNSFNALKIGLASPEQIRSWSKGEVKKPETINYRTLKPEKEGLFCEKIFGPQKDWECHCGKYKRVRYKGIVCDRCGVEVTQSKVRRERMGHIELAAPVSHIWYFKGIPSRLGLLLNMSPRALEKVLYFASYVVIDPGETSLAKKQLLTETEYREYYDKFESQFKKGKGFKAMMGAEAIKELLKELDLEALTKELRNDLKTAKGQKKVRTVRRLEVAESFRKSGNKPEWMILDVIPVIPPDLRPMVQLDGGRFATSDLNDLYRRVINRNNRLKRLLNLGAPDIIVRNEKRMLQEAVDALIDNGRRGRAVTGPGNRPLKSLSDMLKGKQGRFRQNLLGKRVDYSGRSVIVVGPELKIYQCGLPKEMALELFKPFVMKRLVEKELSHNIKSAKRMVEKVRPEVWDVLEEVIKEHPVLLNRAPTLHRLGIQAFEPVLIEGRAIQIHPLVCPAYNADFDGDQMAVHLPLSAEAQAEARILMLASQNILNPKDGSPVATPTQDMVLGSYYLTLENTSDFKNDAYFSSPAEAVMAFRQKDIDMQEPIAVDVRNYEKKDFSLPENNKPSDSNLLITTVGKIIFNEIFPEDFPYVNGEKPGLNEYDWLKSGERIEDKLKQREPREAIQKGSLGDLVGHCYRKYGSTKTASILDKMKEVGYSYATKAGVTIGITDVAVPEKKHEIISDAEGKVDEVEKQHHRGLITPQERYTRVIDIWNNAKDSVTGAVMDNLDIFNPIYMMATSGARGNISQITQLAGMRGLMADPTGRIIDLPIKTNFREGLTVLEYFNSTHGARKGLADTALKTADSGYLTRRLVDVSQDVIVREEDCGETDGVEVGAITNGNEIIEGIGDRVVGRFAAADIRDRQGNMIVNRNELITEDAAEQIQEAKLDQVPIRSVLTCKTKNGVCVKCYGRDLATGAVANVGEAVGIIAAQSIGEPGTQLTMRTFHTGGVAGDDITQGLPRIEELFEARKPKGLAVISEIDGRITVKTEHNKRKVIVTPEKGEQKSYNIPYGARLKVKDGDEINAGDEITEGSINPHDLLKIKGVRGVQLYILQEVQKVYRMQGVDISDKHIEIIIRQMLKKVRIEEAGDTELLPGSYVDFFDFEKVNERIKEEGGEPAKAKSLLLGITKASLATDSFLSAASFQETTRVLTEAAIKGKVDPLIGLKENVIIGKLVPAGTGMPHYRNIDLAYNDEENEAQSDKSQDEQEIGEITVDMGE.

Cysteine 60, cysteine 62, cysteine 75, and cysteine 78 together coordinate Zn(2+). Mg(2+)-binding residues include aspartate 455, aspartate 457, and aspartate 459. Residues cysteine 824, cysteine 897, cysteine 904, and cysteine 907 each coordinate Zn(2+). Residues 1195 to 1218 are disordered; sequence ENEAQSDKSQDEQEIGEITVDMGE.

It belongs to the RNA polymerase beta' chain family. As to quaternary structure, the RNAP catalytic core consists of 2 alpha, 1 beta, 1 beta' and 1 omega subunit. When a sigma factor is associated with the core the holoenzyme is formed, which can initiate transcription. The cofactor is Mg(2+). Requires Zn(2+) as cofactor.

It carries out the reaction RNA(n) + a ribonucleoside 5'-triphosphate = RNA(n+1) + diphosphate. DNA-dependent RNA polymerase catalyzes the transcription of DNA into RNA using the four ribonucleoside triphosphates as substrates. The polypeptide is DNA-directed RNA polymerase subunit beta' (Natranaerobius thermophilus (strain ATCC BAA-1301 / DSM 18059 / JW/NM-WN-LF)).